Consider the following 466-residue polypeptide: Argininosuccinate lyase (466 aa).

This sequence belongs to the lyase 1 family. Argininosuccinate lyase subfamily.

It is found in the cytoplasm. It carries out the reaction 2-(N(omega)-L-arginino)succinate = fumarate + L-arginine. The protein operates within amino-acid biosynthesis; L-arginine biosynthesis; L-arginine from L-ornithine and carbamoyl phosphate: step 3/3. In Ehrlichia ruminantium (strain Gardel), this protein is Argininosuccinate lyase.